The chain runs to 305 residues: Sulfate adenylyltransferase subunit 2 (305 aa).

It belongs to the PAPS reductase family. CysD subfamily. In terms of assembly, heterodimer composed of CysD, the smaller subunit, and CysN.

The enzyme catalyses sulfate + ATP + H(+) = adenosine 5'-phosphosulfate + diphosphate. It participates in sulfur metabolism; hydrogen sulfide biosynthesis; sulfite from sulfate: step 1/3. Functionally, with CysN forms the ATP sulfurylase (ATPS) that catalyzes the adenylation of sulfate producing adenosine 5'-phosphosulfate (APS) and diphosphate, the first enzymatic step in sulfur assimilation pathway. APS synthesis involves the formation of a high-energy phosphoric-sulfuric acid anhydride bond driven by GTP hydrolysis by CysN coupled to ATP hydrolysis by CysD. The polypeptide is Sulfate adenylyltransferase subunit 2 (Pseudomonas syringae pv. tomato (strain ATCC BAA-871 / DC3000)).